A 463-amino-acid chain; its full sequence is Bifunctional protein GlmU (463 aa).

The interval Met1–Arg233 is pyrophosphorylase. UDP-N-acetyl-alpha-D-glucosamine-binding positions include Leu10 to Gly13, Lys24, Gln76, Gly81 to Thr82, Tyr104 to Asp106, Gly143, Glu158, Asn173, and Asn231. Asp106 contributes to the Mg(2+) binding site. Asn231 is a binding site for Mg(2+). The interval Tyr234 to Lys254 is linker. The interval Gly255 to Arg463 is N-acetyltransferase. UDP-N-acetyl-alpha-D-glucosamine-binding residues include Arg336 and Lys354. The active-site Proton acceptor is the His366. UDP-N-acetyl-alpha-D-glucosamine contacts are provided by Tyr369 and Asn380. Acetyl-CoA is bound by residues Asn389–Tyr390, Ala426, and Arg443.

The protein in the N-terminal section; belongs to the N-acetylglucosamine-1-phosphate uridyltransferase family. It in the C-terminal section; belongs to the transferase hexapeptide repeat family. As to quaternary structure, homotrimer. Requires Mg(2+) as cofactor.

The protein resides in the cytoplasm. The catalysed reaction is alpha-D-glucosamine 1-phosphate + acetyl-CoA = N-acetyl-alpha-D-glucosamine 1-phosphate + CoA + H(+). It carries out the reaction N-acetyl-alpha-D-glucosamine 1-phosphate + UTP + H(+) = UDP-N-acetyl-alpha-D-glucosamine + diphosphate. It participates in nucleotide-sugar biosynthesis; UDP-N-acetyl-alpha-D-glucosamine biosynthesis; N-acetyl-alpha-D-glucosamine 1-phosphate from alpha-D-glucosamine 6-phosphate (route II): step 2/2. Its pathway is nucleotide-sugar biosynthesis; UDP-N-acetyl-alpha-D-glucosamine biosynthesis; UDP-N-acetyl-alpha-D-glucosamine from N-acetyl-alpha-D-glucosamine 1-phosphate: step 1/1. The protein operates within bacterial outer membrane biogenesis; LPS lipid A biosynthesis. Its function is as follows. Catalyzes the last two sequential reactions in the de novo biosynthetic pathway for UDP-N-acetylglucosamine (UDP-GlcNAc). The C-terminal domain catalyzes the transfer of acetyl group from acetyl coenzyme A to glucosamine-1-phosphate (GlcN-1-P) to produce N-acetylglucosamine-1-phosphate (GlcNAc-1-P), which is converted into UDP-GlcNAc by the transfer of uridine 5-monophosphate (from uridine 5-triphosphate), a reaction catalyzed by the N-terminal domain. This chain is Bifunctional protein GlmU, found in Caldicellulosiruptor saccharolyticus (strain ATCC 43494 / DSM 8903 / Tp8T 6331).